The sequence spans 190 residues: Glutathione peroxidase 2 (190 aa).

Sec40 is a catalytic residue. Sec40 is a non-standard amino acid (selenocysteine).

This sequence belongs to the glutathione peroxidase family. Homotetramer. In terms of tissue distribution, exclusively expressed in the stomach and small intestine.

The protein localises to the cytoplasm. It is found in the cytosol. It catalyses the reaction 2 glutathione + H2O2 = glutathione disulfide + 2 H2O. The enzyme catalyses a hydroperoxy polyunsaturated fatty acid + 2 glutathione = a hydroxy polyunsaturated fatty acid + glutathione disulfide + H2O. The catalysed reaction is tert-butyl hydroperoxide + 2 glutathione = tert-butanol + glutathione disulfide + H2O. It carries out the reaction cumene hydroperoxide + 2 glutathione = 2-phenylpropan-2-ol + glutathione disulfide + H2O. It catalyses the reaction (13S)-hydroperoxy-(9Z,11E)-octadecadienoate + 2 glutathione = (13S)-hydroxy-(9Z,11E)-octadecadienoate + glutathione disulfide + H2O. The enzyme catalyses (5S)-hydroperoxy-(6E,8Z,11Z,14Z)-eicosatetraenoate + 2 glutathione = (5S)-hydroxy-(6E,8Z,11Z,14Z)-eicosatetraenoate + glutathione disulfide + H2O. The catalysed reaction is (12R)-hydroperoxy-(5Z,8Z,10E,14Z)-eicosatetraenoate + 2 glutathione = (12R)-hydroxy-(5Z,8Z,10E,14Z)-eicosatetraenoate + glutathione disulfide + H2O. It carries out the reaction (15S)-hydroperoxy-(5Z,8Z,11Z,13E)-eicosatetraenoate + 2 glutathione = (15S)-hydroxy-(5Z,8Z,11Z,13E)-eicosatetraenoate + glutathione disulfide + H2O. In terms of biological role, catalyzes the reduction of hydroperoxides in a glutathione-dependent manner thus regulating cellular redox homeostasis. Can reduce small soluble hydroperoxides such as H2O2, cumene hydroperoxide and tert-butyl hydroperoxide, as well as several fatty acid-derived hydroperoxides. Cannot reduce phosphatidycholine hydroperoxide. The sequence is that of Glutathione peroxidase 2 (GPX2) from Macaca fuscata fuscata (Japanese macaque).